A 521-amino-acid polypeptide reads, in one-letter code: GMP synthase [glutamine-hydrolyzing] (521 aa).

The Glutamine amidotransferase type-1 domain maps to 5 to 197; it reads KILILDFGSQ…VLDICGAQPG (193 aa). The active-site Nucleophile is the Cys-81. Residues His-171 and Glu-173 contribute to the active site. A GMPS ATP-PPase domain is found at 198 to 390; that stretch reads WTMPNYIEEA…LGLPREMVYR (193 aa). Residue 225 to 231 coordinates ATP; that stretch reads SGGVDSS.

Homodimer.

It catalyses the reaction XMP + L-glutamine + ATP + H2O = GMP + L-glutamate + AMP + diphosphate + 2 H(+). It functions in the pathway purine metabolism; GMP biosynthesis; GMP from XMP (L-Gln route): step 1/1. In terms of biological role, catalyzes the synthesis of GMP from XMP. The polypeptide is GMP synthase [glutamine-hydrolyzing] (guaA) (Neisseria meningitidis serogroup A / serotype 4A (strain DSM 15465 / Z2491)).